A 797-amino-acid polypeptide reads, in one-letter code: Hid-1 family protein P27G11.12 (797 aa).

The protein belongs to the hid-1 family.

The protein localises to the cytoplasm. Its subcellular location is the nucleus. The protein is Hid-1 family protein P27G11.12 of Schizosaccharomyces pombe (strain 972 / ATCC 24843) (Fission yeast).